The chain runs to 172 residues: Bone marrow stromal antigen 2 (172 aa).

Residues 1 to 30 (MAPSFYHYLPVPMDEMGGKQGWGSHRQWLG) lie on the Cytoplasmic side of the membrane. The chain crosses the membrane as a helical; Signal-anchor for type II membrane protein span at residues 31-51 (AAILVVLFGVTLVILTIYFAV). Over 52–152 (TANSVACRDG…ETSSTVQVNS (101 aa)) the chain is Extracellular. Residue Asn-70 is glycosylated (N-linked (GlcNAc...) asparagine). Positions 74 to 147 (LLQRQLTRTQ…LRIQKETSST (74 aa)) form a coiled coil. N-linked (GlcNAc...) asparagine; atypical glycosylation occurs at Asn-94. An N-linked (GlcNAc...) asparagine glycan is attached at Asn-97. The GPI-anchor amidated serine moiety is linked to residue Ser-152. Residues 153-172 (GSSMVVSSLLVLKVSLFLLF) constitute a propeptide, removed in mature form.

As to quaternary structure, parallel homodimer; disulfide-linked. May form homotetramers under reducing conditions. Isoform 1 and isoform 2 form homodimers and also heterodimers with each other. Dimerization is essential for its antiviral activity. Interacts (via cytoplasmic domain) with ARHGAP44. Interacts with MMP14 (via C-terminal cytoplasmic tail). Interacts with LILRA4/ILT7. Interacts with RNF115. As to expression, in naive mice, specifically expressed on type I interferon-producing cells (at protein level).

It is found in the golgi apparatus. It localises to the trans-Golgi network. The protein resides in the cell membrane. Its subcellular location is the late endosome. The protein localises to the membrane raft. It is found in the cytoplasm. It localises to the apical cell membrane. Functionally, IFN-induced antiviral host restriction factor which efficiently blocks the release of diverse mammalian enveloped viruses by directly tethering nascent virions to the membranes of infected cells. Acts as a direct physical tether, holding virions to the cell membrane and linking virions to each other. The tethered virions can be internalized by endocytosis and subsequently degraded or they can remain on the cell surface. In either case, their spread as cell-free virions is restricted. Its target viruses belong to diverse families, including retroviridae: human immunodeficiency virus type 1 (HIV-1), mouse mammary tumor virus (MMTV) and murine leukemia virus (MLV), filoviridae: ebola virus (EBOV), arenaviridae: lassa virus (LASV), and rhabdoviridae: vesicular stomatitis virus (VSV). Can inhibit cell surface proteolytic activity of MMP14 causing decreased activation of MMP15 which results in inhibition of cell growth and migration. Can stimulate signaling by LILRA4/ILT7 and consequently provide negative feedback to the production of IFN by plasmacytoid dendritic cells in response to viral infection. Plays a role in the organization of the subapical actin cytoskeleton in polarized epithelial cells. The protein is Bone marrow stromal antigen 2 (Bst2) of Mus musculus (Mouse).